The primary structure comprises 194 residues: Small ribosomal subunit protein uS4c (194 aa).

Residues 82–143 (MRLDNILFRL…KERSKVLIQN (62 aa)) enclose the S4 RNA-binding domain.

Belongs to the universal ribosomal protein uS4 family. In terms of assembly, part of the 30S ribosomal subunit. Contacts protein S5. The interaction surface between S4 and S5 is involved in control of translational fidelity.

The protein resides in the plastid. It localises to the chloroplast. In terms of biological role, one of the primary rRNA binding proteins, it binds directly to 16S rRNA where it nucleates assembly of the body of the 30S subunit. With S5 and S12 plays an important role in translational accuracy. The chain is Small ribosomal subunit protein uS4c (rps4) from Trimezia steyermarkii (Steyermark's trimezia).